The chain runs to 130 residues: Protein ApaG (130 aa).

The 125-residue stretch at 3 to 127 (STITRDIQIT…FSLDSPFSRQ (125 aa)) folds into the ApaG domain.

The chain is Protein ApaG from Beijerinckia indica subsp. indica (strain ATCC 9039 / DSM 1715 / NCIMB 8712).